A 913-amino-acid polypeptide reads, in one-letter code: Bifunctional uridylyltransferase/uridylyl-removing enzyme (913 aa).

The segment at Met1–Pro358 is uridylyltransferase. The interval Ile359–Val729 is uridylyl-removing. Residues Val476–Val592 enclose the HD domain. ACT domains are found at residues Gln730–Arg815 and Ile838–Val913.

Belongs to the GlnD family. Mg(2+) is required as a cofactor.

It carries out the reaction [protein-PII]-L-tyrosine + UTP = [protein-PII]-uridylyl-L-tyrosine + diphosphate. It catalyses the reaction [protein-PII]-uridylyl-L-tyrosine + H2O = [protein-PII]-L-tyrosine + UMP + H(+). Uridylyltransferase (UTase) activity is inhibited by glutamine, while glutamine activates uridylyl-removing (UR) activity. Its function is as follows. Modifies, by uridylylation and deuridylylation, the PII regulatory proteins (GlnB and homologs), in response to the nitrogen status of the cell that GlnD senses through the glutamine level. Under low glutamine levels, catalyzes the conversion of the PII proteins and UTP to PII-UMP and PPi, while under higher glutamine levels, GlnD hydrolyzes PII-UMP to PII and UMP (deuridylylation). Thus, controls uridylylation state and activity of the PII proteins, and plays an important role in the regulation of nitrogen assimilation and metabolism. This Psychrobacter cryohalolentis (strain ATCC BAA-1226 / DSM 17306 / VKM B-2378 / K5) protein is Bifunctional uridylyltransferase/uridylyl-removing enzyme.